Here is a 189-residue protein sequence, read N- to C-terminus: uncharacterized protein (189 aa).

Basic and acidic residues predominate over residues 105–115; the sequence is EKLEKEEESKT. The segment at 105 to 189 is disordered; sequence EKLEKEEESK…TDDEKTEVST (85 aa). Positions 116–136 are enriched in basic residues; the sequence is AKKRAKRLRQKAAAKKRKLTK. Residues 141–151 show a composition bias toward acidic residues; that stretch reads SDESSSDDSDS. Over residues 161 to 177 the composition is skewed to basic and acidic residues; that stretch reads SEGKQNTEVEDKDKVEK. The span at 178–189 shows a compositional bias: acidic residues; sequence EETDDEKTEVST.

This is an uncharacterized protein from Caenorhabditis elegans.